Here is a 366-residue protein sequence, read N- to C-terminus: Homer protein homolog 1 (366 aa).

Position 2 is an N-acetylglycine (G2). In terms of domain architecture, WH1 spans 2-110 (GEQPIFSTRA…EKFQEFKEAA (109 aa)). A disordered region spans residues 114–189 (KEKSQEKMEL…RTQALSHASS (76 aa)). Polar residues-rich tracts occupy residues 138-147 (SPLTPESING) and 155-170 (DVTQ…TQNA). The stretch at 193-364 (KHWEAELATL…LRDNLAKLLE (172 aa)) forms a coiled coil. The interval 302–366 (KLQEVEIRNK…DNLAKLLECS (65 aa)) is required for tetramerization. At S318 the chain carries Phosphoserine.

It belongs to the Homer family. Tetramer; this tetrameric structure is critical for forming the high-order complex with SHANK1, which in turn is necessary for the structural and functional integrity of dendritic spines. Isoform 1, isoform 2 and isoform 3 encode a coiled-coil structure that mediates homo- and heteromultimerization. Interacts with GRM1, GRM5, ITPR1, DNM3, RYR1, RYR2 and SHANK3. Interacts with IFT57 and OPHN1. Interacts with SHANK1; forms high-order polymerized complex with a mesh-like network structure, at least composed of SHANK1, HOMER1 and DLGAP1; the complex formation is SHANK1 multimerization dependent. Interacts with NFATC4. Interacts with DAGLA (via PPXXF motif); this interaction is required for the cell membrane localization of DAGLA. Interacts with SRGAP2. Expressed in skeletal muscle at the level of the Z line, in the forebrain and cerebellum. As to expression, expressed in cardiac and skeletal muscle. In terms of tissue distribution, expressed in the hippocampus. Expressed in skeletal muscle at the level of the Z line, in the heart, forebrain and cerebellum.

It is found in the cytoplasm. It localises to the postsynaptic density. The protein resides in the synapse. The protein localises to the cell projection. Its subcellular location is the dendritic spine. In terms of biological role, postsynaptic density scaffolding protein. Binds and cross-links cytoplasmic regions of GRM1, GRM5, ITPR1, DNM3, RYR1, RYR2, SHANK1 and SHANK3. By physically linking GRM1 and GRM5 with ER-associated ITPR1 receptors, it aids the coupling of surface receptors to intracellular calcium release. May also couple GRM1 to PI3 kinase through its interaction with AGAP2. Isoform 1 regulates the trafficking and surface expression of GRM5. Differentially regulates the functions of the calcium activated channel ryanodine receptors RYR1 and RYR2. Isoform 1 decreases the activity of RYR2, and increases the activity of RYR1, whereas isoform 5 counteracts the effects by competing for binding sites. Isoform 3 regulates the trafficking and surface expression of GRM5. Isoform 5 acts as a natural dominant negative, in dynamic competition with constitutively expressed isoform 1, isoform 2 and isoform 3 to regulate synaptic metabotropic glutamate function. Isoform 5, may be involved in the structural changes that occur at synapses during long-lasting neuronal plasticity and development. Forms a high-order complex with SHANK1, which in turn is necessary for the structural and functional integrity of dendritic spines. Negatively regulates T cell activation by inhibiting the calcineurin-NFAT pathway. Acts by competing with calcineurin/PPP3CA for NFAT protein binding, hence preventing NFAT activation by PPP3CA. The sequence is that of Homer protein homolog 1 from Mus musculus (Mouse).